Reading from the N-terminus, the 94-residue chain is Integration host factor subunit beta (94 aa).

The protein belongs to the bacterial histone-like protein family. As to quaternary structure, heterodimer of an alpha and a beta chain.

Functionally, this protein is one of the two subunits of integration host factor, a specific DNA-binding protein that functions in genetic recombination as well as in transcriptional and translational control. The chain is Integration host factor subunit beta from Sodalis glossinidius (strain morsitans).